Consider the following 526-residue polypeptide: Nucleolar complex protein 4 homolog A (526 aa).

Helical transmembrane passes span 307 to 327 (AAYD…FILI), 358 to 378 (FFHL…LVAA), and 386 to 406 (LALT…CNLI).

Belongs to the CBF/MAK21 family.

Its subcellular location is the nucleus membrane. It is found in the nucleus. The protein localises to the nucleolus. The chain is Nucleolar complex protein 4 homolog A (noc4l-a) from Xenopus laevis (African clawed frog).